A 218-amino-acid chain; its full sequence is Octanoyltransferase (218 aa).

In terms of domain architecture, BPL/LPL catalytic spans 31 to 206 (REAGDEVWLV…QLVKHLDYAE (176 aa)). Substrate is bound by residues 70–77 (RGGQVTYH), 137–139 (SLG), and 150–152 (GLA). Catalysis depends on Cys-168, which acts as the Acyl-thioester intermediate.

It belongs to the LipB family.

It is found in the cytoplasm. It carries out the reaction octanoyl-[ACP] + L-lysyl-[protein] = N(6)-octanoyl-L-lysyl-[protein] + holo-[ACP] + H(+). It functions in the pathway protein modification; protein lipoylation via endogenous pathway; protein N(6)-(lipoyl)lysine from octanoyl-[acyl-carrier-protein]: step 1/2. In terms of biological role, catalyzes the transfer of endogenously produced octanoic acid from octanoyl-acyl-carrier-protein onto the lipoyl domains of lipoate-dependent enzymes. Lipoyl-ACP can also act as a substrate although octanoyl-ACP is likely to be the physiological substrate. This is Octanoyltransferase from Pseudomonas syringae pv. tomato (strain ATCC BAA-871 / DC3000).